The following is a 293-amino-acid chain: Urease accessory protein UreD 2 (293 aa).

Belongs to the UreD family. As to quaternary structure, ureD, UreF and UreG form a complex that acts as a GTP-hydrolysis-dependent molecular chaperone, activating the urease apoprotein by helping to assemble the nickel containing metallocenter of UreC. The UreE protein probably delivers the nickel.

Its subcellular location is the cytoplasm. Required for maturation of urease via the functional incorporation of the urease nickel metallocenter. This Streptomyces griseus subsp. griseus (strain JCM 4626 / CBS 651.72 / NBRC 13350 / KCC S-0626 / ISP 5235) protein is Urease accessory protein UreD 2.